A 518-amino-acid chain; its full sequence is Glutamate--cysteine ligase (518 aa).

It belongs to the glutamate--cysteine ligase type 1 family. Type 1 subfamily.

The enzyme catalyses L-cysteine + L-glutamate + ATP = gamma-L-glutamyl-L-cysteine + ADP + phosphate + H(+). It functions in the pathway sulfur metabolism; glutathione biosynthesis; glutathione from L-cysteine and L-glutamate: step 1/2. This Shigella boydii serotype 4 (strain Sb227) protein is Glutamate--cysteine ligase.